Reading from the N-terminus, the 271-residue chain is Formamidopyrimidine-DNA glycosylase (271 aa).

Pro2 serves as the catalytic Schiff-base intermediate with DNA. The Proton donor role is filled by Glu3. Lys58 serves as the catalytic Proton donor; for beta-elimination activity. DNA is bound by residues His91, Arg110, and Arg152. The FPG-type zinc finger occupies 237–271 (SVYGRNDAPCPGCGAPIRRSRQGGRSTYFCDRCQH). Arg261 (proton donor; for delta-elimination activity) is an active-site residue.

Belongs to the FPG family. As to quaternary structure, monomer. It depends on Zn(2+) as a cofactor.

The catalysed reaction is Hydrolysis of DNA containing ring-opened 7-methylguanine residues, releasing 2,6-diamino-4-hydroxy-5-(N-methyl)formamidopyrimidine.. It carries out the reaction 2'-deoxyribonucleotide-(2'-deoxyribose 5'-phosphate)-2'-deoxyribonucleotide-DNA = a 3'-end 2'-deoxyribonucleotide-(2,3-dehydro-2,3-deoxyribose 5'-phosphate)-DNA + a 5'-end 5'-phospho-2'-deoxyribonucleoside-DNA + H(+). In terms of biological role, involved in base excision repair of DNA damaged by oxidation or by mutagenic agents. Acts as a DNA glycosylase that recognizes and removes damaged bases. Has a preference for oxidized purines, such as 7,8-dihydro-8-oxoguanine (8-oxoG). Has AP (apurinic/apyrimidinic) lyase activity and introduces nicks in the DNA strand. Cleaves the DNA backbone by beta-delta elimination to generate a single-strand break at the site of the removed base with both 3'- and 5'-phosphates. The sequence is that of Formamidopyrimidine-DNA glycosylase from Geotalea uraniireducens (strain Rf4) (Geobacter uraniireducens).